The following is a 423-amino-acid chain: Imidazolonepropionase (423 aa).

2 residues coordinate Fe(3+): His-78 and His-80. Positions 78 and 80 each coordinate Zn(2+). Arg-87, Tyr-150, and His-183 together coordinate 4-imidazolone-5-propanoate. Tyr-150 lines the N-formimidoyl-L-glutamate pocket. A Fe(3+)-binding site is contributed by His-247. Residue His-247 participates in Zn(2+) binding. Glu-250 contributes to the 4-imidazolone-5-propanoate binding site. Asp-322 contacts Fe(3+). Asp-322 provides a ligand contact to Zn(2+). N-formimidoyl-L-glutamate is bound by residues Asn-324 and Gly-326. Ser-327 is a binding site for 4-imidazolone-5-propanoate.

This sequence belongs to the metallo-dependent hydrolases superfamily. HutI family. The cofactor is Zn(2+). Requires Fe(3+) as cofactor.

The protein localises to the cytoplasm. It carries out the reaction 4-imidazolone-5-propanoate + H2O = N-formimidoyl-L-glutamate. It participates in amino-acid degradation; L-histidine degradation into L-glutamate; N-formimidoyl-L-glutamate from L-histidine: step 3/3. Its function is as follows. Catalyzes the hydrolytic cleavage of the carbon-nitrogen bond in imidazolone-5-propanoate to yield N-formimidoyl-L-glutamate. It is the third step in the universal histidine degradation pathway. The chain is Imidazolonepropionase from Bacillus cereus (strain ZK / E33L).